Reading from the N-terminus, the 225-residue chain is Phosphatidylserine decarboxylase proenzyme (225 aa).

Serine 188 functions as the Schiff-base intermediate with substrate; via pyruvic acid in the catalytic mechanism. At serine 188 the chain carries Pyruvic acid (Ser); by autocatalysis.

Belongs to the phosphatidylserine decarboxylase family. PSD-A subfamily. Heterodimer of a large membrane-associated beta subunit and a small pyruvoyl-containing alpha subunit. Requires pyruvate as cofactor. Post-translationally, is synthesized initially as an inactive proenzyme. Formation of the active enzyme involves a self-maturation process in which the active site pyruvoyl group is generated from an internal serine residue via an autocatalytic post-translational modification. Two non-identical subunits are generated from the proenzyme in this reaction, and the pyruvate is formed at the N-terminus of the alpha chain, which is derived from the carboxyl end of the proenzyme. The post-translation cleavage follows an unusual pathway, termed non-hydrolytic serinolysis, in which the side chain hydroxyl group of the serine supplies its oxygen atom to form the C-terminus of the beta chain, while the remainder of the serine residue undergoes an oxidative deamination to produce ammonia and the pyruvoyl prosthetic group on the alpha chain.

The protein localises to the cell membrane. The catalysed reaction is a 1,2-diacyl-sn-glycero-3-phospho-L-serine + H(+) = a 1,2-diacyl-sn-glycero-3-phosphoethanolamine + CO2. It participates in phospholipid metabolism; phosphatidylethanolamine biosynthesis; phosphatidylethanolamine from CDP-diacylglycerol: step 2/2. In terms of biological role, catalyzes the formation of phosphatidylethanolamine (PtdEtn) from phosphatidylserine (PtdSer). This Parvibaculum lavamentivorans (strain DS-1 / DSM 13023 / NCIMB 13966) protein is Phosphatidylserine decarboxylase proenzyme.